Reading from the N-terminus, the 343-residue chain is S-adenosylmethionine:tRNA ribosyltransferase-isomerase (343 aa).

It belongs to the QueA family. In terms of assembly, monomer.

Its subcellular location is the cytoplasm. It catalyses the reaction 7-aminomethyl-7-carbaguanosine(34) in tRNA + S-adenosyl-L-methionine = epoxyqueuosine(34) in tRNA + adenine + L-methionine + 2 H(+). The protein operates within tRNA modification; tRNA-queuosine biosynthesis. Transfers and isomerizes the ribose moiety from AdoMet to the 7-aminomethyl group of 7-deazaguanine (preQ1-tRNA) to give epoxyqueuosine (oQ-tRNA). This Coxiella burnetii (strain CbuG_Q212) (Coxiella burnetii (strain Q212)) protein is S-adenosylmethionine:tRNA ribosyltransferase-isomerase.